Reading from the N-terminus, the 145-residue chain is Ribonuclease H (145 aa).

In terms of domain architecture, RNase H type-1 spans 1 to 141 (MQEVTIYSDG…ADALANRGVE (141 aa)). Mg(2+) is bound by residues Asp9, Glu47, Asp69, and Asp133.

This sequence belongs to the RNase H family. In terms of assembly, monomer. Mg(2+) serves as cofactor.

The protein resides in the cytoplasm. It catalyses the reaction Endonucleolytic cleavage to 5'-phosphomonoester.. Its function is as follows. Endonuclease that specifically degrades the RNA of RNA-DNA hybrids. The chain is Ribonuclease H from Cupriavidus necator (strain ATCC 17699 / DSM 428 / KCTC 22496 / NCIMB 10442 / H16 / Stanier 337) (Ralstonia eutropha).